Here is a 141-residue protein sequence, read N- to C-terminus: Light-regulated protein 1, chloroplastic (141 aa).

The N-terminal 41 residues, 1 to 41 (MQGALFIKPTILLPLPSSVSSPKLTFLLPHATKASRLSSLR), are a transit peptide targeting the chloroplast. Residues 35 to 51 (SRLSSLRSNNSSSSSSL) show a composition bias toward low complexity. The segment at 35-58 (SRLSSLRSNNSSSSSSLTSDPNTV) is disordered. The 2 X 15 AA approximate repeats stretch occupies residues 58–132 (VDYNSSILSV…ACDDLGGEFC (75 aa)). 2 repeat units span residues 67–81 (VFPAEACEVISGYAC) and 118–132 (VFREEACDDLGGEFC).

As to quaternary structure, component of high molecular weight thylakoid LFNRs-containing protein complexes containing LIR1, LFNR1, LFNR2, TIC62 and TROL proteins. Interacts directly with LFNR1 and LFNR2; LIR1 increases the affinity of LFNR1 and LFNR2 for TIC62 and subsequent thylakoid relocalization. May form interchain disulfide bonds with LFNR1 and LFNR2.

Its subcellular location is the plastid. The protein resides in the chloroplast thylakoid membrane. It localises to the chloroplast envelope. The protein localises to the chloroplast stroma. Thylakoid-determinant subunit of high molecular weight LFNRs-containing protein complexes. The polypeptide is Light-regulated protein 1, chloroplastic (Arabidopsis thaliana (Mouse-ear cress)).